A 463-amino-acid chain; its full sequence is MTLKIHDTLTREKRDFVPADPQRVTMYVCGPTVYNYAHIGNFRPVVVFDVLFRVLRHLYGEDAVVYARNVTDVDDKINQKAADEGVPISVITDRYLAAYHQDADALGALRPTLEPKATEHIGAILEMIGQLVENGSAYAAEGHVLFDTQSFADYGQLSGRPLDEMIAGARVEVAPYKRHPADFVLWKPSKENEPEWESPWGAGRPGWHIECSAMIDKALGQTIDIHAGGIDLTFPHHENEVAQSRCAHKTSVLANYWMHNGFLDMSGEKMSKSLGNVIIPHELLETTPGEVIRWALLSAHYRQPLDWTPELLEQSKKSLDRLYGALRRAKDVAPDQAMEAPAEVMSALMDDLNTPLATSAFFEVSSAIEKAVTAGDTVAIAANKARLLEAGALLGFLQADPDAWFEGDASDELKAQVEDLLAKRVAARAAKDWSAADAIRGELDALGVVVMDGPAGATWRMKD.

Cys-29 is a binding site for Zn(2+). The 'HIGH' region signature appears at 31-41; the sequence is PTVYNYAHIGN. Residues Cys-211, His-236, and Glu-240 each coordinate Zn(2+). The short motif at 269–273 is the 'KMSKS' region element; sequence KMSKS. Lys-272 serves as a coordination point for ATP.

It belongs to the class-I aminoacyl-tRNA synthetase family. In terms of assembly, monomer. Zn(2+) serves as cofactor.

It is found in the cytoplasm. It catalyses the reaction tRNA(Cys) + L-cysteine + ATP = L-cysteinyl-tRNA(Cys) + AMP + diphosphate. The chain is Cysteine--tRNA ligase from Caulobacter vibrioides (strain ATCC 19089 / CIP 103742 / CB 15) (Caulobacter crescentus).